The sequence spans 362 residues: Cell death regulator Aven (362 aa).

3 disordered regions span residues Met-1 to Lys-111, Val-214 to Gly-237, and Val-253 to Ser-362. Residues Arg-8 to Arg-17 are compositionally biased toward basic residues. The span at Arg-37–Gly-47 shows a compositional bias: gly residues. Basic residues predominate over residues Arg-50–Arg-60. The span at Gly-61–Pro-72 shows a compositional bias: gly residues. A compositionally biased stretch (acidic residues) spans Val-90–Glu-105. Ser-94 carries the post-translational modification Phosphoserine. N6-methyllysine is present on Lys-230. Positions Glu-350–Ser-362 are enriched in acidic residues.

As to quaternary structure, binds Apaf-1, BCL-2 and BAD (Bcl-xl). In terms of tissue distribution, highly expressed in testis, ovary, thymus, prostate, spleen, small intestine, colon, heart, skeletal muscle, liver, kidney and pancreas.

It localises to the endomembrane system. In terms of biological role, protects against apoptosis mediated by Apaf-1. This Homo sapiens (Human) protein is Cell death regulator Aven (AVEN).